The sequence spans 564 residues: NAD-dependent malic enzyme (564 aa).

The active-site Proton donor is Tyr102. Position 155 (Arg155) interacts with NAD(+). The active-site Proton acceptor is the Lys173. A divalent metal cation contacts are provided by Glu244, Asp245, and Asp268. Residues Asp268 and Asn417 each contribute to the NAD(+) site.

Belongs to the malic enzymes family. As to quaternary structure, homotetramer. The cofactor is Mg(2+). It depends on Mn(2+) as a cofactor.

It catalyses the reaction (S)-malate + NAD(+) = pyruvate + CO2 + NADH. It carries out the reaction oxaloacetate + H(+) = pyruvate + CO2. In Pseudomonas aeruginosa (strain LESB58), this protein is NAD-dependent malic enzyme.